A 557-amino-acid polypeptide reads, in one-letter code: Formate--tetrahydrofolate ligase 2 (557 aa).

66–73 (TPAGEGKT) is an ATP binding site.

The protein belongs to the formate--tetrahydrofolate ligase family.

The enzyme catalyses (6S)-5,6,7,8-tetrahydrofolate + formate + ATP = (6R)-10-formyltetrahydrofolate + ADP + phosphate. It participates in one-carbon metabolism; tetrahydrofolate interconversion. This chain is Formate--tetrahydrofolate ligase 2, found in Streptococcus pyogenes serotype M3 (strain ATCC BAA-595 / MGAS315).